The sequence spans 206 residues: Putative 3-methyladenine DNA glycosylase (206 aa).

It belongs to the DNA glycosylase MPG family.

The protein is Putative 3-methyladenine DNA glycosylase of Rhodopseudomonas palustris (strain ATCC BAA-98 / CGA009).